Reading from the N-terminus, the 506-residue chain is Probable UTP--glucose-1-phosphate uridylyltransferase (506 aa).

A phosphoserine mark is found at S15 and S17. Residues 115 to 118, K129, Q192, and G221 each bind UTP; that span reads LNGG. 117-118 serves as a coordination point for substrate; the sequence is GG. K129 lines the Mg(2+) pocket. Substrate-binding positions include H222 and 250–252; that span reads NID. Residues D252 and K394 each contribute to the UTP site. D252 contacts Mg(2+). The active site involves K394. The segment at 455–506 is oligomerization; that stretch reads HLTITGDVNIGRNVTLKGTVIIVASDANRIDIPNGSVLENCVITGNLNILEH.

It belongs to the UDPGP type 1 family. As to quaternary structure, homooctamer.

It localises to the cytoplasm. It is found in the nucleus. It catalyses the reaction alpha-D-glucose 1-phosphate + UTP + H(+) = UDP-alpha-D-glucose + diphosphate. Plays a central role as a glucosyl donor in cellular metabolic pathways. In Schizosaccharomyces pombe (strain 972 / ATCC 24843) (Fission yeast), this protein is Probable UTP--glucose-1-phosphate uridylyltransferase (fyu1).